Reading from the N-terminus, the 451-residue chain is UDP-N-acetylmuramoylalanine--D-glutamate ligase (451 aa).

120-126 (GSNGKTT) contributes to the ATP binding site.

The protein belongs to the MurCDEF family.

It localises to the cytoplasm. It carries out the reaction UDP-N-acetyl-alpha-D-muramoyl-L-alanine + D-glutamate + ATP = UDP-N-acetyl-alpha-D-muramoyl-L-alanyl-D-glutamate + ADP + phosphate + H(+). Its pathway is cell wall biogenesis; peptidoglycan biosynthesis. Its function is as follows. Cell wall formation. Catalyzes the addition of glutamate to the nucleotide precursor UDP-N-acetylmuramoyl-L-alanine (UMA). This is UDP-N-acetylmuramoylalanine--D-glutamate ligase (murD) from Bacillus subtilis (strain 168).